The chain runs to 193 residues: MFVTSAFAEETAPAVTGGDTHSGTGVPAEAHGTFPPFDPATFPSQLLWLAITFGLFYLFLKKVAMPRIGGIIDVRNDRISQDLDQASKLKGEADAAVAAYEQELAEAKKNASSIGQQAADAAKAEAETARKKIEAALDEKLGEAEARISSIKANAMKEVGSIAEDTASAIVEALVGGKASKAEIAAAVKSVAR.

A disordered region spans residues 13–32; that stretch reads PAVTGGDTHSGTGVPAEAHG. The chain crosses the membrane as a helical span at residues 40–60; sequence ATFPSQLLWLAITFGLFYLFL.

It belongs to the ATPase B chain family. As to quaternary structure, F-type ATPases have 2 components, F(1) - the catalytic core - and F(0) - the membrane proton channel. F(1) has five subunits: alpha(3), beta(3), gamma(1), delta(1), epsilon(1). F(0) has three main subunits: a(1), b(2) and c(10-14). The alpha and beta chains form an alternating ring which encloses part of the gamma chain. F(1) is attached to F(0) by a central stalk formed by the gamma and epsilon chains, while a peripheral stalk is formed by the delta and b chains.

The protein localises to the cell inner membrane. Functionally, f(1)F(0) ATP synthase produces ATP from ADP in the presence of a proton or sodium gradient. F-type ATPases consist of two structural domains, F(1) containing the extramembraneous catalytic core and F(0) containing the membrane proton channel, linked together by a central stalk and a peripheral stalk. During catalysis, ATP synthesis in the catalytic domain of F(1) is coupled via a rotary mechanism of the central stalk subunits to proton translocation. Its function is as follows. Component of the F(0) channel, it forms part of the peripheral stalk, linking F(1) to F(0). The chain is ATP synthase subunit b 1 from Mesorhizobium japonicum (strain LMG 29417 / CECT 9101 / MAFF 303099) (Mesorhizobium loti (strain MAFF 303099)).